A 270-amino-acid chain; its full sequence is 3-methyl-2-oxobutanoate hydroxymethyltransferase (270 aa).

The Mg(2+) site is built by aspartate 50 and aspartate 89. 3-methyl-2-oxobutanoate contacts are provided by residues 50–51, aspartate 89, and lysine 118; that span reads DS. Position 120 (glutamate 120) interacts with Mg(2+). The active-site Proton acceptor is glutamate 187.

This sequence belongs to the PanB family. As to quaternary structure, homodecamer; pentamer of dimers. Mg(2+) is required as a cofactor.

The protein resides in the cytoplasm. It carries out the reaction 3-methyl-2-oxobutanoate + (6R)-5,10-methylene-5,6,7,8-tetrahydrofolate + H2O = 2-dehydropantoate + (6S)-5,6,7,8-tetrahydrofolate. It participates in cofactor biosynthesis; (R)-pantothenate biosynthesis; (R)-pantoate from 3-methyl-2-oxobutanoate: step 1/2. In terms of biological role, catalyzes the reversible reaction in which hydroxymethyl group from 5,10-methylenetetrahydrofolate is transferred onto alpha-ketoisovalerate to form ketopantoate. This chain is 3-methyl-2-oxobutanoate hydroxymethyltransferase, found in Helicobacter pylori (strain G27).